We begin with the raw amino-acid sequence, 318 residues long: NADH-ubiquinone oxidoreductase chain 1 (318 aa).

A run of 9 helical transmembrane segments spans residues 2–22 (FLMNILCLVIPILLAMAFLTL), 37–57 (PNIVGPYGLLQPIADAIKLFI), 69–89 (LMFTLAPTLAFTLALSLWIPM), 100–120 (LGVLFILALSSLAVYSILWSG), 136–156 (VAQTISYEVTLAIILLSIMMM), 171–191 (HMWLIFPLWPLAMMWFISTLA), 231–251 (IIMMNALTTTLFLGAFHNPLF), 253–273 (ELFTVNFITKTLILTMMFLWV), and 293–313 (FLPLTLALCMFHVSMPALSAG).

Belongs to the complex I subunit 1 family. Core subunit of respiratory chain NADH dehydrogenase (Complex I) which is composed of 45 different subunits.

The protein localises to the mitochondrion inner membrane. The enzyme catalyses a ubiquinone + NADH + 5 H(+)(in) = a ubiquinol + NAD(+) + 4 H(+)(out). Functionally, core subunit of the mitochondrial membrane respiratory chain NADH dehydrogenase (Complex I) which catalyzes electron transfer from NADH through the respiratory chain, using ubiquinone as an electron acceptor. Essential for the catalytic activity and assembly of complex I. The polypeptide is NADH-ubiquinone oxidoreductase chain 1 (MT-ND1) (Euphractus sexcinctus (Six-banded armadillo)).